Reading from the N-terminus, the 133-residue chain is MVKNTIEESVATGRRKQAVSSVRLRPGTGKIDVNGKAFDEYFPLEIQRVTILSPLKVLGYSNDFDLVIRINGGGIQGQVIATRLGLARALLKKNVDSKQELKSHGFLTRDPRKKERKKYGHKKARKSFQFSKR.

The segment covering 97-113 has biased composition (basic and acidic residues); that stretch reads SKQELKSHGFLTRDPRK. The segment at 97–133 is disordered; that stretch reads SKQELKSHGFLTRDPRKKERKKYGHKKARKSFQFSKR. Residues 114–133 show a composition bias toward basic residues; that stretch reads KERKKYGHKKARKSFQFSKR.

The protein belongs to the universal ribosomal protein uS9 family.

This is Small ribosomal subunit protein uS9 from Chlamydia abortus (strain DSM 27085 / S26/3) (Chlamydophila abortus).